Consider the following 73-residue polypeptide: UPF0346 protein SAS1364 (73 aa).

This sequence belongs to the UPF0346 family.

This chain is UPF0346 protein SAS1364, found in Staphylococcus aureus (strain MSSA476).